Here is a 290-residue protein sequence, read N- to C-terminus: Small ribosomal subunit biogenesis GTPase RsgA (290 aa).

Residues 62-219 (DNYLIRPQVA…VVDTPGFSTL (158 aa)) enclose the CP-type G domain. Residues 111–114 (NKID) and 162–170 (GPSGVGKST) each bind GTP. Positions 243, 248, 250, and 256 each coordinate Zn(2+).

This sequence belongs to the TRAFAC class YlqF/YawG GTPase family. RsgA subfamily. In terms of assembly, monomer. Associates with 30S ribosomal subunit, binds 16S rRNA. Requires Zn(2+) as cofactor.

The protein resides in the cytoplasm. In terms of biological role, one of several proteins that assist in the late maturation steps of the functional core of the 30S ribosomal subunit. Helps release RbfA from mature subunits. May play a role in the assembly of ribosomal proteins into the subunit. Circularly permuted GTPase that catalyzes slow GTP hydrolysis, GTPase activity is stimulated by the 30S ribosomal subunit. In Clostridium novyi (strain NT), this protein is Small ribosomal subunit biogenesis GTPase RsgA.